Reading from the N-terminus, the 107-residue chain is Stellacyanin (107 aa).

One can recognise a Phytocyanin domain in the interval 1–105 (TVYTVGDSAG…GQKVHINVTV (105 aa)). Asn28 carries an N-linked (GlcNAc...) asparagine glycan. Residue His46 participates in Cu cation binding. A disulfide bridge links Cys59 with Cys93. N-linked (GlcNAc...) asparagine glycosylation is present at Asn60. Cu cation-binding residues include Cys87, His92, and Gln97. Residue Asn102 is glycosylated (N-linked (GlcNAc...) asparagine).

This is Stellacyanin from Toxicodendron vernicifluum (Japanese lacquer tree).